Reading from the N-terminus, the 1192-residue chain is Protein pangolin, isoform J (1192 aa).

The Nuclear localization signal motif lies at 351–357; it reads LGLPSEE. The disordered stretch occupies residues 691-713; sequence AKHTSNAQSNESKETTNDKKKPH. Residues 714–782 constitute a DNA-binding region (HMG box); it reads IKKPLNAFML…LHMELYPGWS (69 aa). Disordered stretches follow at residues 790–812, 847–916, 955–986, and 1136–1192; these read VSKKKKRKKDRSTTDSGGNNMKK, PAED…SPST, QRPTLVSTSGSSSGSTSSISTTPNTSSTVSPV, and QLNN…ISVS. A compositionally biased stretch (acidic residues) spans 862-871; that stretch reads SDDDEDDYDD. Low complexity-rich tracts occupy residues 898–915 and 957–986; these read SMPSPGCLSGLSSLQSPS and PTLVSTSGSSSGSTSSISTTPNTSSTVSPV. 2 stretches are compositionally biased toward polar residues: residues 1140 to 1162 and 1170 to 1192; these read RTENPNRSEQTMLSVSNHSVNSS and SQAIVSSNPPNAGSSDNGVISVS.

The protein belongs to the TCF/LEF family. In terms of assembly, binds to the beta-catenin homolog arm or to gro.

The protein localises to the nucleus. Segment polarity protein. Functions together with arm to transduce the Wingless (Wg) signal in embryos and in developing adult tissues. Acts as a transcriptional activator, but in the absence of arm, it binds to gro and acts as a transcriptional repressor of wg-responsive genes. In Drosophila melanogaster (Fruit fly), this protein is Protein pangolin, isoform J.